The primary structure comprises 65 residues: Small ribosomal subunit protein bS21 (65 aa).

Belongs to the bacterial ribosomal protein bS21 family.

In Geobacter sp. (strain M21), this protein is Small ribosomal subunit protein bS21.